The primary structure comprises 790 residues: Vacuolar protein sorting-associated protein 35C (790 aa).

Met1 carries the post-translational modification N-acetylmethionine.

This sequence belongs to the VPS35 family. Component of the retromer complex which consists of VPS29 (MAG1), VPS26 (VPS26A or VPS26B), VPS35 (VPS35A or VPS35B or VPS35C), VPS5/17 (SNX1 or SNX2A or SNX2B). Component of a retromer subcomplex consisting of VPS29 (MAG1), VPS26 (VPS26A or VPS26B), VPS35 (VPS35A or VPS35B or VPS35C).

The protein localises to the cytoplasm. It localises to the endosome membrane. Its subcellular location is the prevacuolar compartment membrane. The protein resides in the golgi apparatus. It is found in the trans-Golgi network membrane. Plays a role in vesicular protein sorting. Component of the membrane-associated retromer complex which is essential in endosome-to-Golgi retrograde transport. Also involved in the efficient sorting of seed storage proteins. The VPS29-VPS26-VPS35 subcomplex may be involved in recycling of specific cargos from endosome to the plasma membrane. This chain is Vacuolar protein sorting-associated protein 35C (VPS35C), found in Arabidopsis thaliana (Mouse-ear cress).